The chain runs to 443 residues: Probable nitrate/nitrite antiporter NarK2 (443 aa).

12 helical membrane-spanning segments follow: residues 32 to 52 (ITTF…ALVV), 66 to 86 (LFWL…IWTF), 95 to 115 (HLVT…GFAV), 123 to 143 (WVLL…SGYM), 172 to 192 (IVQF…LLGG), 210 to 230 (NATF…WVYL), 256 to 276 (SLYI…PLLI), 292 to 312 (YAFL…PISD), 314 to 334 (LGGA…ALLV), 346 to 366 (FPMF…GNAS), 383 to 403 (VIGW…TLAA), and 409 to 429 (TGGF…NFFL).

This sequence belongs to the major facilitator superfamily. Nitrate/nitrite porter (TC 2.A.1.8) family.

It localises to the cell membrane. The catalysed reaction is nitrate(in) + nitrite(out) = nitrate(out) + nitrite(in). In terms of biological role, probable nitrate/nitrite antiporter that may be involved in nitrate import and nitrite export during anaerobic growth. This is Probable nitrate/nitrite antiporter NarK2 from Thermus thermophilus.